Consider the following 872-residue polypeptide: Serine/threonine-protein phosphatase 1 regulatory subunit 10 (872 aa).

The interaction with TOX4 stretch occupies residues 1-348 (MGSGPIDPKE…EPAAPAEPMD (348 aa)). A TFIIS N-terminal domain is found at 73-147 (KLLNSWLTYS…SDWMAVIRSQ (75 aa)). 4 disordered regions span residues 147-213 (QSST…STGL), 247-270 (SATA…NTTP), 307-398 (KKKK…KRKT), and 534-837 (VETL…HGGD). 2 stretches are compositionally biased toward basic and acidic residues: residues 153–166 (AEKD…EGKS) and 174–196 (PLTE…EKPK). Lys-179 is covalently cross-linked (Glycyl lysine isopeptide (Lys-Gly) (interchain with G-Cter in SUMO2)). Low complexity predominate over residues 248 to 258 (ATAAPGDAAPP). Residue Lys-262 forms a Glycyl lysine isopeptide (Lys-Gly) (interchain with G-Cter in SUMO2) linkage. Ser-313 carries the phosphoserine modification. Residues 325-336 (KTSTEPSTAKPS) show a composition bias toward low complexity. Positions 357–433 (PAVEVPELMD…NKIKDFGEAA (77 aa)) are necessary for interaction with PPP1CA. Ser-382 is modified (phosphoserine). The tract at residues 393-408 (GRKRKTVTWPEEGKLR) is necessary for interaction with PPP1CC. The PP1-binding motif motif lies at 394 to 423 (RKRKTVTWPEEGKLREYFYFELDETERVNV). Thr-398 carries the post-translational modification Phosphothreonine; by PKA. Residues 418-619 (TERVNVNKIK…LKQMLVPHGL (202 aa)) are interaction with WDR82. A compositionally biased stretch (gly residues) spans 540 to 551 (GGSGGSPDGAGG). A phosphoserine mark is found at Ser-545 and Ser-591. A compositionally biased stretch (polar residues) spans 583–595 (EILTSIMGSPNNH). A compositionally biased stretch (basic and acidic residues) spans 596–611 (PSEELLKQPDYSDKLK). The segment covering 644 to 655 (PPGPGGPMPGPH) has biased composition (pro residues). Arg-665 carries the omega-N-methylarginine modification. The segment covering 674 to 690 (RGGDPFWDGPGDPMRGG) has biased composition (low complexity). 2 positions are modified to omega-N-methylarginine: Arg-693 and Arg-737. Residues 724-762 (ARGGRSGGGPPNGRGGPGGGGMVGGGGHRPHEGPGGSMG) show a composition bias toward gly residues. The segment covering 795–835 (PHDVPSHRGHDHRGPPPHEHRGHDGHGGGGHRGHDGGHSHG) has biased composition (basic and acidic residues). Residues 838-866 (MSNRPVCRHFMMKGNCRYENNCAFYHPGV) form a C3H1-type zinc finger.

In terms of assembly, component of the PNUTS-PP1 complex (also named PTW/PP1 complex), composed of PPP1R10/PNUTS, TOX4, WDR82, and PPP1CA (or PPP1CB or PPP1CC). Phosphorylated on Thr-398 by PKA within the region necessary for interaction with PPP1CA. Expressed in testis, brain and intestine (at protein level). Highly expressed in testis.

Its subcellular location is the nucleus. It localises to the chromosome. In terms of biological role, substrate-recognition component of the PNUTS-PP1 protein phosphatase complex, a protein phosphatase 1 (PP1) complex that promotes RNA polymerase II transcription pause-release, allowing transcription elongation. Promoter-proximal pausing by RNA polymerase II is a transcription halt following transcription initiation but prior to elongation, which acts as a checkpoint to control that transcripts are favorably configured for transcriptional elongation. The PNUTS-PP1 complex mediates the release of RNA polymerase II from promoter-proximal region of genes by catalyzing dephosphorylation of proteins involved in transcription, such as AFF4, CDK9, MEPCE, INTS12, NCBP1, POLR2M/GDOWN1 and SUPT6H. The PNUTS-PP1 complex also regulates RNA polymerase II transcription termination by mediating dephosphorylation of SUPT5H in termination zones downstream of poly(A) sites, thereby promoting deceleration of RNA polymerase II transcription. PNUTS-PP1 complex is also involved in the response to replication stress by mediating dephosphorylation of POLR2A at 'Ser-5' of the CTD, promoting RNA polymerase II degradation. The PNUTS-PP1 complex also plays a role in the control of chromatin structure and cell cycle progression during the transition from mitosis into interphase. PNUTS-PP1 complex mediates dephosphorylation of MYC, promoting MYC stability by preventing MYC ubiquitination by the SCF(FBXW7) complex. In addition to acts as a substrate-recognition component, PPP1R10/PNUTS also acts as a nuclear targeting subunit for the PNUTS-PP1 complex. In some context, PPP1R10/PNUTS also acts as an inhibitor of protein phosphatase 1 (PP1) activity by preventing access to substrates. The protein is Serine/threonine-protein phosphatase 1 regulatory subunit 10 of Rattus norvegicus (Rat).